A 513-amino-acid chain; its full sequence is Bifunctional purine biosynthesis protein PurH (513 aa).

One can recognise an MGS-like domain in the interval 1-144 (MSKRALISVS…KNHERVGIVV (144 aa)).

This sequence belongs to the PurH family.

It catalyses the reaction (6R)-10-formyltetrahydrofolate + 5-amino-1-(5-phospho-beta-D-ribosyl)imidazole-4-carboxamide = 5-formamido-1-(5-phospho-D-ribosyl)imidazole-4-carboxamide + (6S)-5,6,7,8-tetrahydrofolate. It carries out the reaction IMP + H2O = 5-formamido-1-(5-phospho-D-ribosyl)imidazole-4-carboxamide. It participates in purine metabolism; IMP biosynthesis via de novo pathway; 5-formamido-1-(5-phospho-D-ribosyl)imidazole-4-carboxamide from 5-amino-1-(5-phospho-D-ribosyl)imidazole-4-carboxamide (10-formyl THF route): step 1/1. It functions in the pathway purine metabolism; IMP biosynthesis via de novo pathway; IMP from 5-formamido-1-(5-phospho-D-ribosyl)imidazole-4-carboxamide: step 1/1. The sequence is that of Bifunctional purine biosynthesis protein PurH from Moorella thermoacetica (strain ATCC 39073 / JCM 9320).